Here is a 309-residue protein sequence, read N- to C-terminus: Probable manganese-dependent inorganic pyrophosphatase (309 aa).

Residues histidine 9, aspartate 13, aspartate 15, aspartate 75, histidine 97, and aspartate 149 each coordinate Mn(2+).

Belongs to the PPase class C family. The cofactor is Mn(2+).

The protein localises to the cytoplasm. It carries out the reaction diphosphate + H2O = 2 phosphate + H(+). The polypeptide is Probable manganese-dependent inorganic pyrophosphatase (Bacillus velezensis (strain DSM 23117 / BGSC 10A6 / LMG 26770 / FZB42) (Bacillus amyloliquefaciens subsp. plantarum)).